Consider the following 225-residue polypeptide: GrpE protein homolog 2, mitochondrial (225 aa).

A mitochondrion-targeting transit peptide spans 1–32 (MAVRSLWACRLRVQRLLAWSAAWESKGWPLPF). Lys142 is subject to N6-acetyllysine.

This sequence belongs to the GrpE family. Probable component of the PAM complex at least composed of a mitochondrial HSP70 protein, GRPEL1 or GRPEL2, TIMM44, TIMM16/PAM16 and TIMM14/DNAJC19.

It localises to the mitochondrion matrix. In terms of biological role, essential component of the PAM complex, a complex required for the translocation of transit peptide-containing proteins from the inner membrane into the mitochondrial matrix in an ATP-dependent manner. Seems to control the nucleotide-dependent binding of mitochondrial HSP70 to substrate proteins. Stimulates ATPase activity of mt-HSP70. May also serve to modulate the interconversion of oligomeric (inactive) and monomeric (active) forms of mt-HSP70. This chain is GrpE protein homolog 2, mitochondrial (GRPEL2), found in Pongo abelii (Sumatran orangutan).